Consider the following 368-residue polypeptide: tRNA 2-selenouridine synthase (368 aa).

The Rhodanese domain maps to 15-138; that stretch reads FLNQHPIMDV…MRQYLIGVIE (124 aa). Cys-98 acts as the S-selanylcysteine intermediate in catalysis.

The protein belongs to the SelU family. Monomer.

The enzyme catalyses 5-methylaminomethyl-2-thiouridine(34) in tRNA + selenophosphate + (2E)-geranyl diphosphate + H2O + H(+) = 5-methylaminomethyl-2-selenouridine(34) in tRNA + (2E)-thiogeraniol + phosphate + diphosphate. The catalysed reaction is 5-methylaminomethyl-2-thiouridine(34) in tRNA + (2E)-geranyl diphosphate = 5-methylaminomethyl-S-(2E)-geranyl-thiouridine(34) in tRNA + diphosphate. It carries out the reaction 5-methylaminomethyl-S-(2E)-geranyl-thiouridine(34) in tRNA + selenophosphate + H(+) = 5-methylaminomethyl-2-(Se-phospho)selenouridine(34) in tRNA + (2E)-thiogeraniol. It catalyses the reaction 5-methylaminomethyl-2-(Se-phospho)selenouridine(34) in tRNA + H2O = 5-methylaminomethyl-2-selenouridine(34) in tRNA + phosphate. Involved in the post-transcriptional modification of the uridine at the wobble position (U34) of tRNA(Lys), tRNA(Glu) and tRNA(Gln). Catalyzes the conversion of 2-thiouridine (S2U-RNA) to 2-selenouridine (Se2U-RNA). Acts in a two-step process involving geranylation of 2-thiouridine (S2U) to S-geranyl-2-thiouridine (geS2U) and subsequent selenation of the latter derivative to 2-selenouridine (Se2U) in the tRNA chain. The polypeptide is tRNA 2-selenouridine synthase (Shewanella baltica (strain OS155 / ATCC BAA-1091)).